Reading from the N-terminus, the 438-residue chain is sn-glycerol-3-phosphate-binding periplasmic protein UgpB (438 aa).

The signal sequence occupies residues 1–23 (MKPLHYTASALALGLALMGNAQA). Positions 65, 89, 144, 270, 307, 346, and 397 each coordinate sn-glycerol 3-phosphate.

This sequence belongs to the bacterial solute-binding protein 1 family. The complex is composed of two ATP-binding proteins (UgpC), two transmembrane proteins (UgpA and UgpE) and a solute-binding protein (UgpB).

The protein localises to the periplasm. In terms of biological role, part of the ABC transporter complex UgpBAEC involved in sn-glycerol-3-phosphate (G3P) import. Binds G3P. This chain is sn-glycerol-3-phosphate-binding periplasmic protein UgpB (ugpB), found in Shigella dysenteriae serotype 1 (strain Sd197).